Here is a 465-residue protein sequence, read N- to C-terminus: Hexokinase-4 (465 aa).

Positions 10–454 (ATKKEKVEQI…SGRGAALVSA (445 aa)) constitute a Hexokinase domain. Residues 67–203 (EGSEVGDFLS…DFEMDVVAMV (137 aa)) are hexokinase small subdomain. Residue 78–83 (DLGGTN) coordinates ATP. Residues 151–152 (SF), 168–169 (TK), and 204–205 (ND) contribute to the substrate site. The interval 204–443 (NDTVATMISC…CEITFIESEE (240 aa)) is hexokinase large subdomain. T228 contacts ATP. Substrate-binding residues include N231, E256, and E290. ATP contacts are provided by residues 295–296 (GK), 332–336 (TRFVS), and 411–415 (SVYKL).

This sequence belongs to the hexokinase family. Monomer. Interacts with MIDN; the interaction occurs preferentially at low glucose levels and results in inhibition of hexokinase activity. Interacts with GCKR; leading to sequestration in the nucleus.

It localises to the cytoplasm. Its subcellular location is the nucleus. The protein localises to the mitochondrion. It carries out the reaction a D-hexose + ATP = a D-hexose 6-phosphate + ADP + H(+). The enzyme catalyses D-fructose + ATP = D-fructose 6-phosphate + ADP + H(+). It catalyses the reaction D-glucose + ATP = D-glucose 6-phosphate + ADP + H(+). The catalysed reaction is D-mannose + ATP = D-mannose 6-phosphate + ADP + H(+). It functions in the pathway carbohydrate metabolism; hexose metabolism. The protein operates within carbohydrate degradation; glycolysis; D-glyceraldehyde 3-phosphate and glycerone phosphate from D-glucose: step 1/4. Subject to allosteric regulation. Low glucose and high fructose-6-phosphate triggers association with the inhibitor GCKR followed by sequestration in the nucleus. Catalyzes the phosphorylation of hexose, such as D-glucose, D-fructose and D-mannose, to hexose 6-phosphate (D-glucose 6-phosphate, D-fructose 6-phosphate and D-mannose 6-phosphate, respectively). Compared to other hexokinases, has a weak affinity for D-glucose, and is effective only when glucose is abundant. Mainly expressed in pancreatic beta cells and the liver and constitutes a rate-limiting step in glucose metabolism in these tissues. Since insulin secretion parallels glucose metabolism and the low glucose affinity of GCK ensures that it can change its enzymatic activity within the physiological range of glucose concentrations, GCK acts as a glucose sensor in the pancreatic beta cell. In pancreas, plays an important role in modulating insulin secretion. In liver, helps to facilitate the uptake and conversion of glucose by acting as an insulin-sensitive determinant of hepatic glucose usage. Required to provide D-glucose 6-phosphate for the synthesis of glycogen. Mediates the initial step of glycolysis by catalyzing phosphorylation of D-glucose to D-glucose 6-phosphate. In Mus musculus (Mouse), this protein is Hexokinase-4.